The sequence spans 360 residues: Chorismate synthase (360 aa).

The disordered stretch occupies residues 36–60; the sequence is LSEDDIQPDLDRRKPGTSKYTTPRR. R48 serves as a coordination point for NADP(+). FMN is bound by residues 125-127, 246-247, G286, 301-305, and R327; these read RSS, NA, and KPTSS.

Belongs to the chorismate synthase family. As to quaternary structure, homotetramer. FMNH2 is required as a cofactor.

It catalyses the reaction 5-O-(1-carboxyvinyl)-3-phosphoshikimate = chorismate + phosphate. It functions in the pathway metabolic intermediate biosynthesis; chorismate biosynthesis; chorismate from D-erythrose 4-phosphate and phosphoenolpyruvate: step 7/7. Catalyzes the anti-1,4-elimination of the C-3 phosphate and the C-6 proR hydrogen from 5-enolpyruvylshikimate-3-phosphate (EPSP) to yield chorismate, which is the branch point compound that serves as the starting substrate for the three terminal pathways of aromatic amino acid biosynthesis. This reaction introduces a second double bond into the aromatic ring system. The protein is Chorismate synthase of Histophilus somni (strain 129Pt) (Haemophilus somnus).